The following is a 334-amino-acid chain: N-acetyl-gamma-glutamyl-phosphate reductase (334 aa).

The active site involves C154.

It belongs to the NAGSA dehydrogenase family. Type 1 subfamily.

The protein localises to the cytoplasm. It carries out the reaction N-acetyl-L-glutamate 5-semialdehyde + phosphate + NADP(+) = N-acetyl-L-glutamyl 5-phosphate + NADPH + H(+). Its pathway is amino-acid biosynthesis; L-arginine biosynthesis; N(2)-acetyl-L-ornithine from L-glutamate: step 3/4. Functionally, catalyzes the NADPH-dependent reduction of N-acetyl-5-glutamyl phosphate to yield N-acetyl-L-glutamate 5-semialdehyde. This Aliivibrio fischeri (strain ATCC 700601 / ES114) (Vibrio fischeri) protein is N-acetyl-gamma-glutamyl-phosphate reductase.